The primary structure comprises 505 residues: Maturase K (505 aa).

This sequence belongs to the intron maturase 2 family. MatK subfamily.

Its subcellular location is the plastid. It is found in the chloroplast. Functionally, usually encoded in the trnK tRNA gene intron. Probably assists in splicing its own and other chloroplast group II introns. This is Maturase K from Froelichia floridana (Florida snake-cotton).